The following is a 1236-amino-acid chain: DNA topoisomerase 2 (1236 aa).

ATP-binding positions include Asn-65, Asn-96, 124–126 (SSN), 137–144 (GRHGYGAK), and 354–356 (QSK). The Toprim domain maps to 434 to 548 (RTLIITEGDS…KLLQNNPGYI (115 aa)). Mg(2+) contacts are provided by Glu-440, Asp-517, and Asp-519. The Topo IIA-type catalytic domain maps to 685–1101 (IPHCVDGLKP…TPVKMWLTEL (417 aa)). Residue Tyr-775 is the O-(5'-phospho-DNA)-tyrosine intermediate of the active site. The interval 956–965 (ALAQRIYING) is interaction with DNA. A disordered region spans residues 1161 to 1211 (YEKPPPSKRRPGESVGGARPSDSAARTVGKRLVGSRSEFKNKKPMSRKNNV).

It belongs to the type II topoisomerase family. In terms of assembly, homodimer. Mg(2+) is required as a cofactor. Mn(2+) serves as cofactor. It depends on Ca(2+) as a cofactor.

The protein localises to the nucleus. The catalysed reaction is ATP-dependent breakage, passage and rejoining of double-stranded DNA.. Control of topological states of DNA by transient breakage and subsequent rejoining of DNA strands. Topoisomerase II makes double-strand breaks. The protein is DNA topoisomerase 2 (TOP2) of Leishmania chagasi.